The primary structure comprises 264 residues: Ribosomal RNA small subunit methyltransferase A (264 aa).

Positions 12, 14, 40, 61, 86, and 105 each coordinate S-adenosyl-L-methionine.

It belongs to the class I-like SAM-binding methyltransferase superfamily. rRNA adenine N(6)-methyltransferase family. RsmA subfamily.

It is found in the cytoplasm. It catalyses the reaction adenosine(1518)/adenosine(1519) in 16S rRNA + 4 S-adenosyl-L-methionine = N(6)-dimethyladenosine(1518)/N(6)-dimethyladenosine(1519) in 16S rRNA + 4 S-adenosyl-L-homocysteine + 4 H(+). Functionally, specifically dimethylates two adjacent adenosines (A1518 and A1519) in the loop of a conserved hairpin near the 3'-end of 16S rRNA in the 30S particle. May play a critical role in biogenesis of 30S subunits. In Fusobacterium nucleatum subsp. nucleatum (strain ATCC 25586 / DSM 15643 / BCRC 10681 / CIP 101130 / JCM 8532 / KCTC 2640 / LMG 13131 / VPI 4355), this protein is Ribosomal RNA small subunit methyltransferase A.